Consider the following 268-residue polypeptide: Tryptophan synthase alpha chain (268 aa).

Residues Glu49 and Asp60 each act as proton acceptor in the active site.

It belongs to the TrpA family. In terms of assembly, tetramer of two alpha and two beta chains.

It catalyses the reaction (1S,2R)-1-C-(indol-3-yl)glycerol 3-phosphate + L-serine = D-glyceraldehyde 3-phosphate + L-tryptophan + H2O. It functions in the pathway amino-acid biosynthesis; L-tryptophan biosynthesis; L-tryptophan from chorismate: step 5/5. The alpha subunit is responsible for the aldol cleavage of indoleglycerol phosphate to indole and glyceraldehyde 3-phosphate. This is Tryptophan synthase alpha chain from Aliivibrio fischeri (strain MJ11) (Vibrio fischeri).